A 530-amino-acid polypeptide reads, in one-letter code: Glucose-6-phosphate isomerase (530 aa).

The active-site Proton donor is the Glu-322. Catalysis depends on residues His-351 and Lys-455.

It belongs to the GPI family.

Its subcellular location is the cytoplasm. It catalyses the reaction alpha-D-glucose 6-phosphate = beta-D-fructose 6-phosphate. It functions in the pathway carbohydrate biosynthesis; gluconeogenesis. The protein operates within carbohydrate degradation; glycolysis; D-glyceraldehyde 3-phosphate and glycerone phosphate from D-glucose: step 2/4. In terms of biological role, catalyzes the reversible isomerization of glucose-6-phosphate to fructose-6-phosphate. This chain is Glucose-6-phosphate isomerase, found in Geotalea daltonii (strain DSM 22248 / JCM 15807 / FRC-32) (Geobacter daltonii).